Consider the following 104-residue polypeptide: uncharacterized protein (104 aa).

The stretch at 42–104 (ARDSFDQDFE…AREERHKLGR (63 aa)) forms a coiled coil.

The protein belongs to the WXG100 family.

This is an uncharacterized protein from Bacillus subtilis (strain 168).